The chain runs to 455 residues: Growth/differentiation factor 6 (455 aa).

The N-terminal stretch at 1-22 is a signal peptide; that stretch reads MDTPRVLLSAVFLISFLWDLPG. The propeptide occupies 23–335; that stretch reads FQQASISSSS…LPSPGRRRRR (313 aa). The segment at 29–93 is disordered; that stretch reads SSSSSSAELG…EPPGRGPRVV (65 aa). The span at 45–76 shows a compositional bias: basic and acidic residues; it reads SRKEGKMQRAPRDSDAGREGQEPQPRPQDEPR. A compositionally biased stretch (low complexity) spans 77–91; sequence AQQPRAQEPPGRGPR. The N-linked (GlcNAc...) asparagine glycan is linked to N114. 2 disordered regions span residues 244 to 267 and 300 to 351; these read EAEARARGPQQPPPPDLRSLGFGR and AEAA…KKSR. Basic residues predominate over residues 330–351; it reads GRRRRRTAFASRHGKRHGKKSR. Cystine bridges form between C354/C420, C383/C452, and C387/C454.

The protein belongs to the TGF-beta family. Homodimer; disulfide-linked.

The protein localises to the secreted. In terms of biological role, growth factor that controls proliferation and cellular differentiation in the retina and bone formation. Plays a key role in regulating apoptosis during retinal development. Establishes dorsal-ventral positional information in the retina and controls the formation of the retinotectal map. Required for normal formation of bones and joints in the limbs, skull, digits and axial skeleton. Plays a key role in establishing boundaries between skeletal elements during development. Regulation of GDF6 expression seems to be a mechanism for evolving species-specific changes in skeletal structures. Seems to positively regulate differentiation of chondrogenic tissue through the growth factor receptors subunits BMPR1A, BMPR1B, BMPR2 and ACVR2A, leading to the activation of SMAD1-SMAD5-SMAD8 complex. The regulation of chondrogenic differentiation is inhibited by NOG. Also involved in the induction of adipogenesis from mesenchymal stem cells. This mechanism acts through the growth factor receptors subunits BMPR1A, BMPR2 and ACVR2A and the activation of SMAD1-SMAD5-SMAD8 complex and MAPK14/p38. This chain is Growth/differentiation factor 6 (GDF6), found in Homo sapiens (Human).